The sequence spans 447 residues: C4-dicarboxylate transport protein (447 aa).

9 helical membrane-spanning segments follow: residues Ser13 to Pro33, Leu49 to Met69, Leu81 to Val101, Ala149 to Leu169, Val189 to Met209, Leu227 to Ala247, Gly302 to Ala322, Thr336 to Phe356, and Ile357 to Ile377. The interval Glu422–Arg447 is disordered. Positions Ala425–Glu436 are enriched in acidic residues.

Belongs to the dicarboxylate/amino acid:cation symporter (DAACS) (TC 2.A.23) family.

The protein resides in the cell inner membrane. Its function is as follows. Responsible for the transport of dicarboxylates such as succinate, fumarate, and malate from the periplasm across the membrane. In Leptothrix cholodnii (strain ATCC 51168 / LMG 8142 / SP-6) (Leptothrix discophora (strain SP-6)), this protein is C4-dicarboxylate transport protein.